A 452-amino-acid polypeptide reads, in one-letter code: UPF0210 protein PTH_0987 (452 aa).

The protein belongs to the UPF0210 family. As to quaternary structure, homodimer.

The protein is UPF0210 protein PTH_0987 of Pelotomaculum thermopropionicum (strain DSM 13744 / JCM 10971 / SI).